A 556-amino-acid polypeptide reads, in one-letter code: MEHSSPLAAMQPPSVMLGHCFRSDAPTSYHGFSPLPGLGPGGFNFKDLSMKRSNGDYFGTKVVRGSSPTASLAADLSQNFHIDQSPQVATPRRSLFSACLLGNGNRRGVDDAMTTPPLPSSSPAPAMDIMDMSPLPHKPPFISTPEIELDSPTLESSPMDTTMMSTDGLVPDSPTVLPKDGKQERRRPTFLRPSLARSKAQSFQVGMTRPAPESQGPPFKFQTNGINKTSSGVAASLEDMFGESPQRERPMMRINSTSGLNSRLRPPLGSGSHVRGNGSPSAASVRKSAHPNMRPRKQCRRSLSMYEHPEDVIADSEVSYTSNAPLQSISDFEETQALQLPHFIPEEQADNLPRIDKATLVDIKEGKYDNMFDNIMIIDCRFEYEYDGGHIVGAVNYNDKENLAAELFADPKPRTAIVFHCEYSVHRAPLMAKYIRHRDRAYNVDHYPQLSYPDMYILEGGYSGFFAEHRSLCYPQNYVEMSAKEHEFACERGLGKVKQRSKLSRAQTFAFGQQSPEMEDSPTGRCRNNPGDRKLLASPFNDSPGSRFPGRRMLSY.

Disordered regions lie at residues 165-186 (STDG…QERR) and 257-297 (TSGL…RPRK). Residues 287–297 (KSAHPNMRPRK) show a composition bias toward basic residues. The Rhodanese domain maps to 371-474 (MFDNIMIIDC…FFAEHRSLCY (104 aa)). Cysteine 421 is an active-site residue. Residues 505–516 (RAQTFAFGQQSP) show a composition bias toward polar residues. The tract at residues 505–556 (RAQTFAFGQQSPEMEDSPTGRCRNNPGDRKLLASPFNDSPGSRFPGRRMLSY) is disordered.

It belongs to the MPI phosphatase family.

It catalyses the reaction O-phospho-L-tyrosyl-[protein] + H2O = L-tyrosyl-[protein] + phosphate. Functionally, this protein functions as a dosage-dependent inducer in mitotic control. It is a tyrosine protein phosphatase required for progression of the cell cycle. It may directly dephosphorylate p34(cdc2) and activate the p34(cdc2) kinase activity. In Emericella nidulans (strain FGSC A4 / ATCC 38163 / CBS 112.46 / NRRL 194 / M139) (Aspergillus nidulans), this protein is M-phase inducer phosphatase (nimT).